The sequence spans 183 residues: Dermatopontin (183 aa).

A Pyrrolidone carboxylic acid modification is found at Gln1. Sulfotyrosine is present on Tyr5. Tandem repeats lie at residues 8 to 61, 52 to 57, 62 to 117, and 107 to 112. The interval 8–117 is 2 X 53-55 AA tandem repeats; sequence PYQQYHDYSD…REWQFYCCRY (110 aa). Disulfide bonds link Cys32-Cys59, Cys72-Cys114, Cys88-Cys115, Cys121-Cys178, and Cys125-Cys171. The segment at 52-168 is 3 X 6 AA tandem repeats of D-R-[EQ]-W-[NQK]-[FY]; the sequence is DRQWNYACMP…AVERDRQWKF (117 aa). Sulfotyrosine is present on residues Tyr144, Tyr146, Tyr148, and Tyr149. The stretch at 163-168 is one 2-3 repeat; sequence DRQWKF. A Sulfotyrosine modification is found at Tyr176.

This sequence belongs to the dermatopontin family. As to quaternary structure, interacts with TGFB1, DCN and collagen. Post-translationally, sulfated on tyrosine residue(s). In terms of tissue distribution, detected in skin, skeletal muscle, heart, lung, articular cartilage, long bone and calvaria. Smaller amounts detected in kidney. Not detected in brain, liver or spleen.

It is found in the secreted. The protein localises to the extracellular space. Its subcellular location is the extracellular matrix. Seems to mediate adhesion by cell surface integrin binding. May serve as a communication link between the dermal fibroblast cell surface and its extracellular matrix environment. Enhances TGFB1 activity. Inhibits cell proliferation. Accelerates collagen fibril formation, and stabilizes collagen fibrils against low-temperature dissociation. This Sus scrofa (Pig) protein is Dermatopontin (DPT).